The chain runs to 356 residues: Fructose-1,6-bisphosphatase class 1 1 (356 aa).

Mg(2+) is bound by residues Glu-106, Asp-129, Leu-131, and Asp-132. Substrate contacts are provided by residues 132–135, Asn-225, Tyr-258, and Lys-288; that span reads DGSS. Residue Glu-294 participates in Mg(2+) binding.

The protein belongs to the FBPase class 1 family. In terms of assembly, homotetramer. The cofactor is Mg(2+).

The protein localises to the cytoplasm. It carries out the reaction beta-D-fructose 1,6-bisphosphate + H2O = beta-D-fructose 6-phosphate + phosphate. It functions in the pathway carbohydrate biosynthesis; gluconeogenesis. The chain is Fructose-1,6-bisphosphatase class 1 1 from Salinibacter ruber (strain DSM 13855 / M31).